The sequence spans 322 residues: Ribonucleoside-diphosphate reductase subunit beta nrdF1 (322 aa).

Fe cation-binding residues include Asp70, Glu101, and His104. Tyr108 is an active-site residue. Glu161, Glu195, and His198 together coordinate Fe cation.

This sequence belongs to the ribonucleoside diphosphate reductase small chain family. As to quaternary structure, tetramer of two alpha and two beta subunits. The cofactor is Fe cation.

It catalyses the reaction a 2'-deoxyribonucleoside 5'-diphosphate + [thioredoxin]-disulfide + H2O = a ribonucleoside 5'-diphosphate + [thioredoxin]-dithiol. Provides the precursors necessary for DNA synthesis. Catalyzes the biosynthesis of deoxyribonucleotides from the corresponding ribonucleotides. In Mycobacterium tuberculosis (strain CDC 1551 / Oshkosh), this protein is Ribonucleoside-diphosphate reductase subunit beta nrdF1 (nrdF1).